Consider the following 1277-residue polypeptide: DNA repair protein RAD5B (1277 aa).

A disordered region spans residues 271–293; sequence KLEQENDDLFSSGDSDGTSAKRR. The Helicase ATP-binding domain maps to 674–871; sequence PTATQMARGG…YSLLCFLHVE (198 aa). Position 687–694 (687–694) interacts with ATP; the sequence is DAMGLGKT. Residues 822 to 825 carry the DEAH box motif; the sequence is DEAH. The RING-type zinc finger occupies 1040 to 1080; sequence CPICLESADDPVLTPCAHRMCRECLLTSWRSPSCGLCPICR. The Helicase C-terminal domain maps to 1113–1277; that stretch reads ELLKCLEKIK…RLEELKMLFR (165 aa).

Belongs to the SNF2/RAD54 helicase family. RAD16 subfamily.

The protein localises to the nucleus. Its function is as follows. Possesses intrinsic ATP-dependent nucleosome-remodeling activity. This activity may be required for DNA repair. Does not seem to be required for DNA repair and regulation of homologous recombination (HR). This Arabidopsis thaliana (Mouse-ear cress) protein is DNA repair protein RAD5B.